We begin with the raw amino-acid sequence, 651 residues long: BTB/POZ domain-containing protein At3g44820 (651 aa).

Positions 25-96 (SDITVVVDDV…CYGARVDITS (72 aa)) constitute a BTB domain. An NPH3 domain is found at 211–509 (DWWYEDISYL…LQVLFFEQMH (299 aa)). A disordered region spans residues 611 to 651 (DAKNDTVQNSVSSTPRSATADHTLPRSSRHSKHRKSFSFFG). The segment covering 615–627 (DTVQNSVSSTPRS) has biased composition (polar residues). Basic residues predominate over residues 637–651 (SSRHSKHRKSFSFFG).

This sequence belongs to the NPH3 family.

Its pathway is protein modification; protein ubiquitination. Functionally, may act as a substrate-specific adapter of an E3 ubiquitin-protein ligase complex (CUL3-RBX1-BTB) which mediates the ubiquitination and subsequent proteasomal degradation of target proteins. This is BTB/POZ domain-containing protein At3g44820 from Arabidopsis thaliana (Mouse-ear cress).